The chain runs to 204 residues: Large ribosomal subunit protein eL15z (204 aa).

Belongs to the eukaryotic ribosomal protein eL15 family.

The polypeptide is Large ribosomal subunit protein eL15z (SB61) (Picea mariana (Black spruce)).